The sequence spans 292 residues: Glycine--tRNA ligase alpha subunit (292 aa).

It belongs to the class-II aminoacyl-tRNA synthetase family. In terms of assembly, tetramer of two alpha and two beta subunits.

The protein localises to the cytoplasm. The enzyme catalyses tRNA(Gly) + glycine + ATP = glycyl-tRNA(Gly) + AMP + diphosphate. In Buchnera aphidicola subsp. Schizaphis graminum (strain Sg), this protein is Glycine--tRNA ligase alpha subunit.